A 384-amino-acid polypeptide reads, in one-letter code: S-adenosylmethionine synthase (384 aa).

H15 is a binding site for ATP. A Mg(2+)-binding site is contributed by D17. Residue E43 participates in K(+) binding. Residues E56 and Q99 each coordinate L-methionine. Residues Q99–R109 form a flexible loop region. Residues D164–K166, R230–F231, D239, R245–K246, A262, and K266 each bind ATP. D239 serves as a coordination point for L-methionine. K270 provides a ligand contact to L-methionine.

This sequence belongs to the AdoMet synthase family. As to quaternary structure, homotetramer; dimer of dimers. Mg(2+) serves as cofactor. Requires K(+) as cofactor.

The protein localises to the cytoplasm. It catalyses the reaction L-methionine + ATP + H2O = S-adenosyl-L-methionine + phosphate + diphosphate. It functions in the pathway amino-acid biosynthesis; S-adenosyl-L-methionine biosynthesis; S-adenosyl-L-methionine from L-methionine: step 1/1. In terms of biological role, catalyzes the formation of S-adenosylmethionine (AdoMet) from methionine and ATP. The overall synthetic reaction is composed of two sequential steps, AdoMet formation and the subsequent tripolyphosphate hydrolysis which occurs prior to release of AdoMet from the enzyme. The polypeptide is S-adenosylmethionine synthase (Klebsiella pneumoniae (strain 342)).